Reading from the N-terminus, the 283-residue chain is Small ribosomal subunit protein uS2 (283 aa).

Residues Arg229–Asn283 form a disordered region. Basic and acidic residues predominate over residues Asp246 to Asn283.

It belongs to the universal ribosomal protein uS2 family.

The chain is Small ribosomal subunit protein uS2 from Cutibacterium acnes (strain DSM 16379 / KPA171202) (Propionibacterium acnes).